A 514-amino-acid chain; its full sequence is Inosine-5'-monophosphate dehydrogenase (514 aa).

2 consecutive CBS domains span residues 112 to 171 (FISK…DTPV) and 175 to 233 (MTRR…PHST). NAD(+) contacts are provided by residues 270–272 (DSS) and 320–322 (GMG). 2 residues coordinate K(+): G322 and G324. S325 contributes to the IMP binding site. C327 is a binding site for K(+). Residue C327 is the Thioimidate intermediate of the active site. Residues 360 to 362 (DGG), 383 to 384 (GG), and 407 to 411 (YRGMG) each bind IMP. R425 acts as the Proton acceptor in catalysis. Residue Q437 coordinates IMP. Residues E496, G497, and G498 each contribute to the K(+) site. The Microbody targeting signal signature appears at 512–514 (AKM).

The protein belongs to the IMPDH/GMPR family. In terms of assembly, heterotetramer. Interacts with glycosomal protein sorting receptor PEX5. The cofactor is K(+).

It localises to the glycosome. It catalyses the reaction IMP + NAD(+) + H2O = XMP + NADH + H(+). The protein operates within purine metabolism; XMP biosynthesis via de novo pathway; XMP from IMP: step 1/1. With respect to regulation, mycophenolic acid (MPA) is a non-competitive inhibitor that prevents formation of the closed enzyme conformation by binding to the same site as the amobile flap. In contrast, mizoribine monophosphate (MZP) is a competitive inhibitor that induces the closed conformation. MPA is a potent inhibitor of mammalian IMPDHs but a poor inhibitor of the bacterial enzymes. MZP is a more potent inhibitor of bacterial IMPDH. Potently inhibited by MPA. Inhibited by XMP and GMP. Functionally, catalyzes the conversion of inosine 5'-phosphate (IMP) to xanthosine 5'-phosphate (XMP), the first committed and rate-limiting step in the de novo synthesis of guanine nucleotides, and therefore plays an important role in the regulation of cell growth. This Leishmania donovani protein is Inosine-5'-monophosphate dehydrogenase.